A 26-amino-acid chain; its full sequence is Oxyopinin-3b (26 aa).

Expressed by the venom gland.

It localises to the secreted. In terms of biological role, may have cytolytic and antimicrobial activity. This Oxyopes takobius (Lynx spider) protein is Oxyopinin-3b.